The primary structure comprises 159 residues: Protein-export protein SecB (159 aa).

Belongs to the SecB family. In terms of assembly, homotetramer, a dimer of dimers. One homotetramer interacts with 1 SecA dimer.

The protein localises to the cytoplasm. Its function is as follows. One of the proteins required for the normal export of preproteins out of the cell cytoplasm. It is a molecular chaperone that binds to a subset of precursor proteins, maintaining them in a translocation-competent state. It also specifically binds to its receptor SecA. The protein is Protein-export protein SecB of Burkholderia mallei (strain NCTC 10229).